The following is a 158-amino-acid chain: Succinate dehydrogenase [ubiquinone] cytochrome b small subunit, mitochondrial (158 aa).

The transit peptide at 1–55 directs the protein to the mitochondrion; it reads MALWRLSVLCGAREGRALFLRTPVVRPALVSAFLQDRPAQGWCGTQHIHLSPSHH. Residues 56–62 lie on the Mitochondrial matrix side of the membrane; the sequence is SGSKAAS. A helical membrane pass occupies residues 63 to 84; that stretch reads LHWTGERVVSVLLLGLIPAAYL. The Mitochondrial intermembrane portion of the chain corresponds to 85 to 89; that stretch reads NPCSA. The helical transmembrane segment at 90 to 110 threads the bilayer; sequence MDYSLAATLTLHSHWGIGQVV. Residue histidine 101 coordinates heme b. At 111–119 the chain is on the mitochondrial matrix side; it reads TDYVHGDAV. Tyrosine 113 contacts a ubiquinone. A helical membrane pass occupies residues 120–141; sequence QKAAKTGLLVLSAFTFAGLCYF. Residues 142–158 lie on the Mitochondrial intermembrane side of the membrane; sequence NYHDVGICKAVAMLWKL.

This sequence belongs to the CybS family. As to quaternary structure, component of complex II composed of four subunits: the flavoprotein (FP) SDHA, iron-sulfur protein (IP) SDHB, and a cytochrome b560 composed of SDHC and SDHD.

Its subcellular location is the mitochondrion inner membrane. Its pathway is carbohydrate metabolism; tricarboxylic acid cycle. Membrane-anchoring subunit of succinate dehydrogenase (SDH) that is involved in complex II of the mitochondrial electron transport chain and is responsible for transferring electrons from succinate to ubiquinone (coenzyme Q). SDH also oxidizes malate to the non-canonical enol form of oxaloacetate, enol-oxaloacetate. Enol-oxaloacetate, which is a potent inhibitor of the succinate dehydrogenase activity, is further isomerized into keto-oxaloacetate. This is Succinate dehydrogenase [ubiquinone] cytochrome b small subunit, mitochondrial (SDHD) from Bos taurus (Bovine).